We begin with the raw amino-acid sequence, 214 residues long: Charged multivesicular body protein 2b (214 aa).

Positions 16–55 (EQNKELRGTQRAITRDRAALEKQEKQLEMEIKKMAKAGNK) form a coiled coil. The disordered stretch occupies residues 178 to 203 (MAKAPSAAKGLPSTSASKSSGISDEE). Positions 189–199 (PSTSASKSSGI) are enriched in polar residues. Positions 202–212 (EEIERQLKALG) match the MIT-interacting motif motif.

It belongs to the SNF7 family. As to quaternary structure, probable core component of the endosomal sorting required for transport complex III (ESCRT-III). ESCRT-III components are thought to multimerize to form a flat lattice on the perimeter membrane of the endosome.

It is found in the cytoplasm. It localises to the cytosol. Its subcellular location is the late endosome membrane. Functionally, probable core component of the endosomal sorting required for transport complex III (ESCRT-III) which is involved in multivesicular bodies (MVBs) formation and sorting of endosomal cargo proteins into MVBs. MVBs contain intraluminal vesicles (ILVs) that are generated by invagination and scission from the limiting membrane of the endosome and mostly are delivered to lysosomes enabling degradation of membrane proteins, such as stimulated growth factor receptors, lysosomal enzymes and lipids. In Xenopus tropicalis (Western clawed frog), this protein is Charged multivesicular body protein 2b (chmp2b).